The sequence spans 216 residues: ATP-dependent Clp protease proteolytic subunit (216 aa).

Ser120 (nucleophile) is an active-site residue. His145 is a catalytic residue.

Belongs to the peptidase S14 family. Fourteen ClpP subunits assemble into 2 heptameric rings which stack back to back to give a disk-like structure with a central cavity, resembling the structure of eukaryotic proteasomes.

It is found in the cytoplasm. It catalyses the reaction Hydrolysis of proteins to small peptides in the presence of ATP and magnesium. alpha-casein is the usual test substrate. In the absence of ATP, only oligopeptides shorter than five residues are hydrolyzed (such as succinyl-Leu-Tyr-|-NHMec, and Leu-Tyr-Leu-|-Tyr-Trp, in which cleavage of the -Tyr-|-Leu- and -Tyr-|-Trp bonds also occurs).. Cleaves peptides in various proteins in a process that requires ATP hydrolysis. Has a chymotrypsin-like activity. Plays a major role in the degradation of misfolded proteins. This chain is ATP-dependent Clp protease proteolytic subunit, found in Cupriavidus metallidurans (strain ATCC 43123 / DSM 2839 / NBRC 102507 / CH34) (Ralstonia metallidurans).